A 296-amino-acid polypeptide reads, in one-letter code: Tyrosine recombinase XerC (296 aa).

One can recognise a Core-binding (CB) domain in the interval 2–85 (ADQASWLERF…ALKQFGQFLL (84 aa)). Positions 106-285 (TLPKNLDPDS…DFQHLAKVYD (180 aa)) constitute a Tyr recombinase domain. Residues Arg145, Lys169, His237, Arg240, and His263 contribute to the active site. Tyr272 acts as the O-(3'-phospho-DNA)-tyrosine intermediate in catalysis.

Belongs to the 'phage' integrase family. XerC subfamily. Forms a cyclic heterotetrameric complex composed of two molecules of XerC and two molecules of XerD.

Its subcellular location is the cytoplasm. Functionally, site-specific tyrosine recombinase, which acts by catalyzing the cutting and rejoining of the recombining DNA molecules. The XerC-XerD complex is essential to convert dimers of the bacterial chromosome into monomers to permit their segregation at cell division. It also contributes to the segregational stability of plasmids. The polypeptide is Tyrosine recombinase XerC (Shewanella amazonensis (strain ATCC BAA-1098 / SB2B)).